A 400-amino-acid chain; its full sequence is Queuine tRNA-ribosyltransferase catalytic subunit 1 (400 aa).

Aspartate 103 serves as the catalytic Proton acceptor. Queuine is bound by residues 103–107 (DSGGF), aspartate 157, glutamine 200, and glycine 227. The RNA binding stretch occupies residues 258 to 264 (GVGYAVD). The active-site Nucleophile is aspartate 277. The segment at 282 to 286 (TRTAR) is RNA binding; important for wobble base 34 recognition. The Zn(2+) site is built by cysteine 315, cysteine 317, cysteine 320, and histidine 345.

The protein belongs to the queuine tRNA-ribosyltransferase family. In terms of assembly, heterodimer of a catalytic subunit qtrt1 and an accessory subunit qtrt2. Zn(2+) is required as a cofactor.

It localises to the cytoplasm. Its subcellular location is the mitochondrion outer membrane. The enzyme catalyses guanosine(34) in tRNA + queuine = queuosine(34) in tRNA + guanine. In terms of biological role, catalytic subunit of the queuine tRNA-ribosyltransferase (TGT) that catalyzes the base-exchange of a guanine (G) residue with queuine (Q) at position 34 (anticodon wobble position) in tRNAs with GU(N) anticodons (tRNA-Asp, -Asn, -His and -Tyr), resulting in the hypermodified nucleoside queuosine (7-(((4,5-cis-dihydroxy-2-cyclopenten-1-yl)amino)methyl)-7-deazaguanosine). Catalysis occurs through a double-displacement mechanism. The nucleophile active site attacks the C1' of nucleotide 34 to detach the guanine base from the RNA, forming a covalent enzyme-RNA intermediate. The proton acceptor active site deprotonates the incoming queuine, allowing a nucleophilic attack on the C1' of the ribose to form the product. The protein is Queuine tRNA-ribosyltransferase catalytic subunit 1 of Danio rerio (Zebrafish).